Reading from the N-terminus, the 31-residue chain is SISCGESCAMISFCFTEVIGCSCKNKVCYLN.

Residues 1–31 (SISCGESCAMISFCFTEVIGCSCKNKVCYLN) constitute a cross-link (cyclopeptide (Ser-Asn)). 3 disulfides stabilise this stretch: Cys4-Cys21, Cys8-Cys23, and Cys14-Cys28.

Post-translationally, this is a cyclic peptide. In terms of tissue distribution, expressed in leaves.

In terms of biological role, probably participates in a plant defense mechanism. Has anti-human immunodeficiency virus activity. This is Leaf cyclotide 1 from Viola hederacea (Australian violet).